The following is a 455-amino-acid chain: MASITGALILAAGKGTRMHSDKPKVLQSILGEPMLRFVYDALEPLFGGNLWTVIGHKADMVREAFKGEDHRFVVQEKQLGTGHALQAAWGELKAAGLDRVVVVNGDTPLLPTSTVATFLKEAMDADVAFMTLTLPDPGAYGRVVRHNRRVVAIVEAKDYDETLYGPEPDEINAGIYCLRMDAVEKLLPRLTNANKSGEYYITDLVGLAVAERMDVIGVECGQDPNLLGVNDPAELIRSEALVRARIALNWIEKRVLIHAPETVRISPRAVLEPGAEIYGPCEIYGASRIARAAVVHSHCWLRDAVVAEGATVHPFSHVEKAEIGPDCVVGPYARLRPGAVMEEGARVGNFVEMKKARLCKGAKANHLTYLGDAEVGPGANIGAGTITCNYDGVHKHKTVIGEGAFIGSNSALVAPVTIGAGSLVGAGSVITKDVPDDSLAIARGRQTTLPRRRNS.

The interval 1–232 (MASITGALIL…DPNLLGVNDP (232 aa)) is pyrophosphorylase. UDP-N-acetyl-alpha-D-glucosamine contacts are provided by residues 10-13 (LAAG), K24, Q75, and 80-81 (GT). D106 contacts Mg(2+). G141, E155, N172, and N230 together coordinate UDP-N-acetyl-alpha-D-glucosamine. Position 230 (N230) interacts with Mg(2+). Positions 233 to 253 (AELIRSEALVRARIALNWIEK) are linker. Residues 254 to 455 (RVLIHAPETV…QTTLPRRRNS (202 aa)) form an N-acetyltransferase region. Residues R336 and K354 each coordinate UDP-N-acetyl-alpha-D-glucosamine. H366 acts as the Proton acceptor in catalysis. UDP-N-acetyl-alpha-D-glucosamine is bound by residues Y369 and N380. Residues A383, 389–390 (NY), S408, A426, and R443 each bind acetyl-CoA.

This sequence in the N-terminal section; belongs to the N-acetylglucosamine-1-phosphate uridyltransferase family. The protein in the C-terminal section; belongs to the transferase hexapeptide repeat family. As to quaternary structure, homotrimer. It depends on Mg(2+) as a cofactor.

The protein resides in the cytoplasm. It carries out the reaction alpha-D-glucosamine 1-phosphate + acetyl-CoA = N-acetyl-alpha-D-glucosamine 1-phosphate + CoA + H(+). It catalyses the reaction N-acetyl-alpha-D-glucosamine 1-phosphate + UTP + H(+) = UDP-N-acetyl-alpha-D-glucosamine + diphosphate. Its pathway is nucleotide-sugar biosynthesis; UDP-N-acetyl-alpha-D-glucosamine biosynthesis; N-acetyl-alpha-D-glucosamine 1-phosphate from alpha-D-glucosamine 6-phosphate (route II): step 2/2. It functions in the pathway nucleotide-sugar biosynthesis; UDP-N-acetyl-alpha-D-glucosamine biosynthesis; UDP-N-acetyl-alpha-D-glucosamine from N-acetyl-alpha-D-glucosamine 1-phosphate: step 1/1. It participates in bacterial outer membrane biogenesis; LPS lipid A biosynthesis. Functionally, catalyzes the last two sequential reactions in the de novo biosynthetic pathway for UDP-N-acetylglucosamine (UDP-GlcNAc). The C-terminal domain catalyzes the transfer of acetyl group from acetyl coenzyme A to glucosamine-1-phosphate (GlcN-1-P) to produce N-acetylglucosamine-1-phosphate (GlcNAc-1-P), which is converted into UDP-GlcNAc by the transfer of uridine 5-monophosphate (from uridine 5-triphosphate), a reaction catalyzed by the N-terminal domain. This Nitratidesulfovibrio vulgaris (strain DSM 19637 / Miyazaki F) (Desulfovibrio vulgaris) protein is Bifunctional protein GlmU.